Consider the following 189-residue polypeptide: UPF0301 protein RT0098 (189 aa).

The protein belongs to the UPF0301 (AlgH) family.

This Rickettsia typhi (strain ATCC VR-144 / Wilmington) protein is UPF0301 protein RT0098.